Here is a 185-residue protein sequence, read N- to C-terminus: Ribosome hibernation promotion factor (185 aa).

The probably still associates with ribosome stretch occupies residues 1-125; the sequence is MIKFNIRGEN…PLDTTDEVAE (125 aa). A required but not sufficient to restore ribosome dimerization, in vitro will replace E.coli RMF in ribosome dimerization region spans residues 126–185; it reads DHVDIVRTKHVALKPMDAEEAVLQMDMLGHDFYVFTDADSNGTHVVYRRTDGRYGLIETE.

Belongs to the HPF/YfiA ribosome-associated protein family. Long HPF subfamily. Interacts with 100S ribosomes in stationary phase; alters the relative position of the 30S and 50S subunits.

It localises to the cytoplasm. Its function is as follows. Required for dimerization of active 70S ribosomes into 100S ribosomes in stationary phase; 100S ribosomes are translationally inactive and sometimes present during exponential growth. Able to dimerize E.coli 70S ribosomes in vitro. The chain is Ribosome hibernation promotion factor from Lactococcus lactis subsp. cremoris (strain MG1363).